Reading from the N-terminus, the 164-residue chain is MAPEKSLERATFGAGCFWGVEEAFRRVPGVVETAVGFMGGTVENPTYPEVCTGRTGHAEVVQVTYDPGTVSYRALLDTFWDAHDPTTPNRQGPDIGTQYRSVIFVHTPEQEAEARASKEEMDQSGKFRRPIVTAIEPAGTFWRAEEYHQQYFAKRGGGQCRTVW.

Cys-16 is an active-site residue.

It belongs to the MsrA Met sulfoxide reductase family.

The enzyme catalyses L-methionyl-[protein] + [thioredoxin]-disulfide + H2O = L-methionyl-(S)-S-oxide-[protein] + [thioredoxin]-dithiol. It carries out the reaction [thioredoxin]-disulfide + L-methionine + H2O = L-methionine (S)-S-oxide + [thioredoxin]-dithiol. In terms of biological role, has an important function as a repair enzyme for proteins that have been inactivated by oxidation. Catalyzes the reversible oxidation-reduction of methionine sulfoxide in proteins to methionine. The polypeptide is Peptide methionine sulfoxide reductase MsrA (Methanoculleus marisnigri (strain ATCC 35101 / DSM 1498 / JR1)).